Reading from the N-terminus, the 436-residue chain is Phosphate-repressible acid phosphatase (436 aa).

Positions 1-20 (MKGTAASALLIALSATAAQA) are cleaved as a signal peptide. Residues Asn-227, Asn-283, and Asn-304 are each glycosylated (N-linked (GlcNAc...) asparagine).

In terms of assembly, monomer.

It catalyses the reaction a phosphate monoester + H2O = an alcohol + phosphate. In Aspergillus niger, this protein is Phosphate-repressible acid phosphatase (pacA).